We begin with the raw amino-acid sequence, 398 residues long: UPF0229 protein Ccel_0490 (398 aa).

Disordered regions lie at residues 1–22 (MAIFRDCSNIGKDRSAEDRRRH) and 68–104 (KSKPGVGAGDGNEKRGDKFPGDSQEGKGKGNAGNSEG). Composition is skewed to basic and acidic residues over residues 11–22 (GKDRSAEDRRRH) and 78–95 (GNEKRGDKFPGDSQEGKG).

The protein belongs to the UPF0229 family.

The polypeptide is UPF0229 protein Ccel_0490 (Ruminiclostridium cellulolyticum (strain ATCC 35319 / DSM 5812 / JCM 6584 / H10) (Clostridium cellulolyticum)).